We begin with the raw amino-acid sequence, 282 residues long: Putative hydrolase Bcenmc03_4750 (282 aa).

Mg(2+) is bound by residues E124, E126, and D155.

Belongs to the FAH family. The cofactor is Mg(2+).

In Burkholderia orbicola (strain MC0-3), this protein is Putative hydrolase Bcenmc03_4750.